Here is a 503-residue protein sequence, read N- to C-terminus: MKIKTDEITSVLKQEILNYKKDLGVEEVGTVLEIGDGIARVFGLKNVMSGEMVEFQNGIFGQAFNLEDNSVGVVVYGNYLDIQEGFSVKRTNRILEVPVGPELLGRVVNPLGEPIDGKGPINAKLTRPVESPAPGIAMRQPVGEPMQTGIKAIDAMIPIGRGQRELIIGDRGTGKTSIALDTILNQKGTGVICVYVAIGQKASTVASTVEMLRNKGALEYTIVVSATAADPAPLQYIAPYSGCSMAEYFMYNEKKATLVVYDDLSKQAVAYRQMSLLLRRPPGREAYPGDVFYLHSRLLERAAKLDDKYGAGSLTALPIIETQEGEVSAYIPTNVISITDGQIYLQSNLFASGNRPAVDVGISVSRVGSAAQIKAMKQVAGKMKLELAQFRDLEAFAQLGTELDPATQAQLDRGNRIVQMLKQPVSSPYPVEEQVVEIFAVTRGFMDKIPVAKVQEYGKYLLNTIKEQYSEVLDSIRKEKKISDEEKLGEVLSKVAEEFLRKH.

169–176 (GDRGTGKT) contributes to the ATP binding site.

It belongs to the ATPase alpha/beta chains family. In terms of assembly, F-type ATPases have 2 components, CF(1) - the catalytic core - and CF(0) - the membrane proton channel. CF(1) has five subunits: alpha(3), beta(3), gamma(1), delta(1), epsilon(1). CF(0) has three main subunits: a(1), b(2) and c(9-12). The alpha and beta chains form an alternating ring which encloses part of the gamma chain. CF(1) is attached to CF(0) by a central stalk formed by the gamma and epsilon chains, while a peripheral stalk is formed by the delta and b chains.

It localises to the cell inner membrane. It carries out the reaction ATP + H2O + 4 H(+)(in) = ADP + phosphate + 5 H(+)(out). Produces ATP from ADP in the presence of a proton gradient across the membrane. The alpha chain is a regulatory subunit. This is ATP synthase subunit alpha from Leptospira interrogans serogroup Icterohaemorrhagiae serovar copenhageni (strain Fiocruz L1-130).